The following is a 93-amino-acid chain: uncharacterized protein (93 aa).

This is an uncharacterized protein from Sulfolobus islandicus filamentous virus (isolate Iceland/Hveragerdi) (SIFV).